The primary structure comprises 60 residues: MATKTLKVTQTKSGIGRLPKHRATLTGLGLRRIGHTVELEDTPSVRGMINKVYYMVSVEG.

The protein belongs to the universal ribosomal protein uL30 family. Part of the 50S ribosomal subunit.

In Shewanella denitrificans (strain OS217 / ATCC BAA-1090 / DSM 15013), this protein is Large ribosomal subunit protein uL30.